The chain runs to 307 residues: Homoserine kinase (307 aa).

ATP is bound at residue 86–96 (PIARGLGSSAA).

The protein belongs to the GHMP kinase family. Homoserine kinase subfamily.

Its subcellular location is the cytoplasm. The catalysed reaction is L-homoserine + ATP = O-phospho-L-homoserine + ADP + H(+). Its pathway is amino-acid biosynthesis; L-threonine biosynthesis; L-threonine from L-aspartate: step 4/5. Functionally, catalyzes the ATP-dependent phosphorylation of L-homoserine to L-homoserine phosphate. This Petrotoga mobilis (strain DSM 10674 / SJ95) protein is Homoserine kinase.